Reading from the N-terminus, the 512-residue chain is Cytochrome P450 72A15 (512 aa).

A helical membrane pass occupies residues glutamate 2–tryptophan 22. Heme is bound at residue cysteine 460.

This sequence belongs to the cytochrome P450 family. The cofactor is heme.

The protein resides in the membrane. The polypeptide is Cytochrome P450 72A15 (CYP72A15) (Arabidopsis thaliana (Mouse-ear cress)).